The sequence spans 524 residues: M-phase inducer phosphatase 1 (524 aa).

The short motif at 74–84 is the Phosphodegron element; sequence MGSSESTDSGF. At S76 the chain carries Phosphoserine; by CHEK1. S79, S82, and S88 each carry phosphoserine; by NEK11. S107 carries the post-translational modification Phosphoserine. S124 is subject to Phosphoserine; by CHEK1 and CHEK2. Residues 141 to 143 carry the KEN box motif; sequence KEN. At S178 the chain carries Phosphoserine; by CHEK1. The disordered stretch occupies residues 264-317; the sequence is LCSSSTRSVLKRPERSQEESPPGSTKRRKSMSGASPKESTNPEKAHETLHQSLS. Phosphoserine; by CHEK1 and CHEK2 occurs at positions 279 and 293. The segment covering 303-312 has biased composition (basic and acidic residues); that stretch reads TNPEKAHETL. The residue at position 321 (S321) is a Phosphoserine. Residues 376-482 form the Rhodanese domain; sequence LIKEFVIIDC…FFMKCQSYCE (107 aa). The active site involves C431. T507 is subject to Phosphothreonine; by CHEK1. S513 and S519 each carry phosphoserine; by PLK3.

The protein belongs to the MPI phosphatase family. As to quaternary structure, interacts with CCNB1/cyclin B1. Interacts with YWHAE/14-3-3 epsilon when phosphorylated. Interacts with CUL1 specifically when CUL1 is neddylated and active. Interacts with BTRC/BTRCP1 and FBXW11/BTRCP2. Interactions with CUL1, BTRC and FBXW11 are enhanced upon DNA damage. Interacts with CHEK2; mediates CDC25A phosphorylation and degradation in response to infrared-induced DNA damages. Interacts with HSP90AB1; prevents heat shock-mediated CDC25A degradation and contributes to cell cycle progression. Phosphorylated by CHEK1 on Ser-76, Ser-124, Ser-178, Ser-279, Ser-293 and Thr-507 during checkpoint mediated cell cycle arrest. Also phosphorylated by CHEK2 on Ser-124, Ser-279, and Ser-293 during checkpoint mediated cell cycle arrest. Phosphorylation on Ser-178 and Thr-507 creates binding sites for YWHAE/14-3-3 epsilon which inhibits CDC25A. Phosphorylation on Ser-76, Ser-124, Ser-178, Ser-279 and Ser-293 may also promote ubiquitin-dependent proteolysis of CDC25A by the SCF complex. Phosphorylation of CDC25A at Ser-76 by CHEK1 primes it for subsequent phosphorylation at Ser-79, Ser-82 and Ser-88 by NEK11. Phosphorylation by NEK11 is required for BTRC-mediated polyubiquitination and degradation. Phosphorylation by PIM1 leads to an increase in phosphatase activity. Phosphorylated by PLK3 following DNA damage, leading to promote its ubiquitination and degradation. In terms of processing, ubiquitinated by the anaphase promoting complex/cyclosome (APC/C) ubiquitin ligase complex that contains FZR1/CDH1 during G1 phase leading to its degradation by the proteasome. Ubiquitinated by a SCF complex containing BTRC and FBXW11 during S phase leading to its degradation by the proteasome. Deubiquitination by USP17L2/DUB3 leads to its stabilization.

The enzyme catalyses O-phospho-L-tyrosyl-[protein] + H2O = L-tyrosyl-[protein] + phosphate. Stimulated by B-type cyclins. Stimulated by PIM1-mediated phosphorylation. Functionally, tyrosine protein phosphatase which functions as a dosage-dependent inducer of mitotic progression. Directly dephosphorylates CDK1 and stimulates its kinase activity. Also dephosphorylates CDK2 in complex with cyclin-E, in vitro. This is M-phase inducer phosphatase 1 (CDC25A) from Homo sapiens (Human).